The chain runs to 437 residues: ATP-dependent RNA helicase RhlB (437 aa).

The short motif at 9–37 (KKFADFPLHKEVQQALNEVGFEFCTPIQA) is the Q motif element. The Helicase ATP-binding domain occupies 40–219 (LPILLAKKDI…YDHMNEPEKV (180 aa)). 53–60 (AQTGTGKT) provides a ligand contact to ATP. A DEAD box motif is present at residues 165–168 (DEAD). In terms of domain architecture, Helicase C-terminal spans 243 to 390 (KMPLLLSLLE…VTSYDSEALL (148 aa)). The segment at 394–437 (PAPKRIHRKPSSHSRNSRDRSGSRPQGGHRGNAPRRHDKTRRHS) is disordered. Residues 425–437 (NAPRRHDKTRRHS) show a composition bias toward basic residues.

Belongs to the DEAD box helicase family. RhlB subfamily. As to quaternary structure, component of the RNA degradosome, which is a multiprotein complex involved in RNA processing and mRNA degradation.

The protein localises to the cytoplasm. The enzyme catalyses ATP + H2O = ADP + phosphate + H(+). Its function is as follows. DEAD-box RNA helicase involved in RNA degradation. Has RNA-dependent ATPase activity and unwinds double-stranded RNA. The protein is ATP-dependent RNA helicase RhlB of Shewanella piezotolerans (strain WP3 / JCM 13877).